Reading from the N-terminus, the 94-residue chain is Small ribosomal subunit protein uS19 (94 aa).

Positions 75–94 (SHTRTFKGHAGDKKAAGSKR) are disordered. Residues 83–94 (HAGDKKAAGSKR) show a composition bias toward basic and acidic residues.

This sequence belongs to the universal ribosomal protein uS19 family.

Its function is as follows. Protein S19 forms a complex with S13 that binds strongly to the 16S ribosomal RNA. This chain is Small ribosomal subunit protein uS19, found in Nitrosomonas europaea (strain ATCC 19718 / CIP 103999 / KCTC 2705 / NBRC 14298).